We begin with the raw amino-acid sequence, 251 residues long: Small ribosomal subunit protein uS2 (251 aa).

A disordered region spans residues 232 to 251 (LQTGEEEMAAAEGESEQVEA). Positions 235-251 (GEEEMAAAEGESEQVEA) are enriched in acidic residues.

Belongs to the universal ribosomal protein uS2 family.

The sequence is that of Small ribosomal subunit protein uS2 from Geobacter metallireducens (strain ATCC 53774 / DSM 7210 / GS-15).